We begin with the raw amino-acid sequence, 529 residues long: UDP-glucuronosyltransferase 2B18 (529 aa).

The N-terminal stretch at 1-21 (MSVKWTSVILLIQLSFYFSSG) is a signal peptide. Residues Asn67 and Asn68 are each glycosylated (N-linked (GlcNAc...) asparagine). Residues 493 to 513 (VIGFLLACVATVIFIIMKCCL) form a helical membrane-spanning segment.

Belongs to the UDP-glycosyltransferase family. As to expression, expressed in liver, prostate, kidney, testis, adrenal, bile duct, bladder, colon, small intestine, cerebellum and pancreas.

It is found in the microsome membrane. The protein localises to the endoplasmic reticulum membrane. It carries out the reaction glucuronate acceptor + UDP-alpha-D-glucuronate = acceptor beta-D-glucuronoside + UDP + H(+). UDPGT is of major importance in the conjugation and subsequent elimination of potentially toxic xenobiotics and endogenous compounds. This isozyme displays activity toward 3-hydroxyandrogens. It is principally active on C19 steroids having a hydroxyl group at position 3-alpha of the steroid molecule and also active on planar phenols and bile acids. The polypeptide is UDP-glucuronosyltransferase 2B18 (UGT2B18) (Macaca fascicularis (Crab-eating macaque)).